The chain runs to 282 residues: MALKQVSSSKCFGGLQKVFEHDSVELKCKMKFAVYLPPKAETGKCPVLYWLSGLTCTEQNFISKSGYHQAASEHGLVVIAPDTSPRGCNIKGEEDSWDFGTGAGFYVDATEDLWKTNYRMYSYVTKELPQLVNDNFPVDPQRMSVFGHSMGGHGALICALKNPGKYKSVSAFAPLCNPVLCRWGKKAFTGYLGTDQSKWEAYDATYLVKSYPGPQLDILIDQGKEDEFLSDGQLLPDNFIAACTEKKIPVVFRLQEGYDHSYYFIATFIADHIRHHAKYLNA.

Residue Ala-2 is modified to N-acetylalanine. An N6-succinyllysine modification is found at Lys-4. Active-site charge relay system residues include Ser-149, Asp-226, and His-260.

It belongs to the esterase D family. As to quaternary structure, homodimer.

The protein resides in the cytoplasm. The protein localises to the cytoplasmic vesicle. The catalysed reaction is S-formylglutathione + H2O = formate + glutathione + H(+). Serine hydrolase involved in the detoxification of formaldehyde. This chain is S-formylglutathione hydrolase (ESD), found in Bos taurus (Bovine).